The chain runs to 1225 residues: Catenin delta-2 (1225 aa).

4 disordered regions span residues 1 to 51 (MFAR…TSAI), 87 to 117 (SETGSMSSMSSAEEQFQWQSQDGQKDIEDEL), 134 to 242 (SGIL…HLPD), and 256 to 312 (SSTL…KSYS). Polar residues-rich tracts occupy residues 20-51 (QPSSASEKTSSLSPGLNTSNGDGSETETTSAI) and 98-108 (AEEQFQWQSQD). A coiled-coil region spans residues 49–84 (SAILASVKEQELQFERLTRELEAERQIVASQLERCK). Residues 149–160 (SLLSQSALQLNS) show a composition bias toward low complexity. Polar residues-rich tracts occupy residues 172–187 (YHSNQTLALGETTPSQ) and 195–209 (ARATGQSFSQGTTSR). Omega-N-methylarginine is present on Arg-209. Positions 217–229 (EPAPPPPPPPREP) are enriched in pro residues. Arg-264 carries the post-translational modification Omega-N-methylarginine. Ser-267 and Ser-276 each carry phosphoserine. 2 positions are modified to omega-N-methylarginine: Arg-282 and Arg-296. The span at 299–312 (SPKQSPSRLAKSYS) shows a compositional bias: polar residues. A phosphoserine mark is found at Ser-327, Ser-360, Ser-415, and Ser-461. Residues 394–438 (GSRASYSSQHGHLGPELRALQSPEHHIDPIYEDRVYQKPPMRSLS) form an ARM 1 repeat. Disordered regions lie at residues 432-483 (PPMR…NAAA) and 514-542 (SPYSKSGPALPPEGTLARSPSIDSIQKDP). Positions 469–478 (LQRTGSQHGP) are enriched in polar residues. Ser-514 carries the post-translational modification Phosphoserine. A Phosphotyrosine modification is found at Tyr-516. ARM repeat units follow at residues 540–579 (KDPREFGWRDPELPEVIQMLQHQFPSVQSNAAAYLQHLCF), 582–621 (NKIKAEIRRQGGIQLLVDLLDHRMTEVHRSACGALRNLVY), 626–666 (DDNK…NLSS), 682–724 (LTNA…NVSS), 728–773 (EARR…NLSY), 835–875 (PKGI…NLAA), 882–921 (VYIRAAVRKEKGLPILVELLRIDNDRVVCAVATALRNMAL), and 975–1018 (MENA…SMWQ). The disordered stretch occupies residues 1042–1077 (TIERDRQRPYSSSRTPSISPVRVSPNNRSASAPASP). Polar residues predominate over residues 1050 to 1059 (PYSSSRTPSI). 2 positions are modified to phosphoserine: Ser-1065 and Ser-1076. A compositionally biased stretch (low complexity) spans 1065 to 1077 (SPNNRSASAPASP).

Belongs to the beta-catenin family. In terms of assembly, binds to E-cadherin at a juxtamembrane site within the cytoplasmic domain. Interacts with PDZD2. Interacts with ZBTB33. Binds to PSEN1. Interacts with ARHGEF28. Interacts (via the extreme C-terminus) with FRMPD2 (via the PDZ 2 domain). Interacts with CDK5. Interacts with CTNNB1. Interacts with GSK3A and GSK3B. Interacts with DNM2. Interacts with CCDC85B. O-glycosylated. Post-translationally, phosphorylated by CDK5. Phosphorylated by GSK3B. In terms of tissue distribution, expressed in brain; highest expression is observed in fetal brain.

It is found in the nucleus. Its subcellular location is the cell junction. It localises to the adherens junction. The protein resides in the cell projection. The protein localises to the dendrite. It is found in the perikaryon. In terms of biological role, has a critical role in neuronal development, particularly in the formation and/or maintenance of dendritic spines and synapses. Involved in the regulation of Wnt signaling. It probably acts on beta-catenin turnover, facilitating beta-catenin interaction with GSK3B, phosphorylation, ubiquitination and degradation. Functions as a transcriptional activator when bound to ZBTB33. May be involved in neuronal cell adhesion and tissue morphogenesis and integrity by regulating adhesion molecules. The chain is Catenin delta-2 (CTNND2) from Homo sapiens (Human).